Reading from the N-terminus, the 563-residue chain is MASQMHTSISSGDEGKDAVLKKERPYKIFFKDLFVFKENEIAARKKERMKNHSMKIYQKTTFSSRMKSRSHLGQLAFFADAGSSSYERLGLDPTLILRLTEGADRKRTVHEFINDQRDRFLLEYTVSTKKKTIKRFERLIAIKENQLKKAEKKLQDDALSFEEFLRENDQRSVDALKMAAQETINKLQMTSELKKASMEVQSIKSDIAKTEFLLKEYMKYGFFLLKLSPKQWQIQQSQKRAQSSKSNHILPKILEKFSINTAKGDNSIDSDKMSVSEEWSSRRGSQGGRHGKHTLGQDSRKSSGFTRPESMASEDSLEYFLEDELVEFDLLPEIYFKEPEELLQVFTELEEQNLTLVQYSQDVDENLEDVNKREKFIQDKINNNISFLLEHKHMLRMNCEREEEKAAELELRSRLFSFGEFNSDAQEKLIDSLSKKINQVYRVCIGDAEVGSLNAVQKLVKVESRLVELSDLIESIPREHVEAIERLKQKERRQKLREEKMKEKQRHQEERLKAALERAVAQPKKKLGRRLIYRSKPQSADKQELLLVSDTRSKSQDEEYFFS.

The stretch at 128-211 (TKKKTIKRFE…SIKSDIAKTE (84 aa)) forms a coiled coil. A disordered region spans residues 265 to 310 (DNSIDSDKMSVSEEWSSRRGSQGGRHGKHTLGQDSRKSSGFTRPES). The span at 269-281 (DSDKMSVSEEWSS) shows a compositional bias: basic and acidic residues. Coiled coils occupy residues 361 to 415 (QDVD…RSRL) and 454 to 522 (NAVQ…AVAQ). Positions 543 to 563 (QELLLVSDTRSKSQDEEYFFS) are disordered.

As to quaternary structure, interacts with CCDC42, CFAP53, IFT88 and ODF2. Interacts with CCDC146. Interacts with TEKT3. Interacts with ubiquitinated histone H2A. As to expression, expressed exclusively in testis where it is detected mainly in spermatogonia and spermatocytes (at protein level).

The protein localises to the cytoplasm. It localises to the cytoskeleton. Its subcellular location is the microtubule organizing center. The protein resides in the centrosome. It is found in the perinuclear region. The protein localises to the cell projection. It localises to the cilium. Its subcellular location is the flagellum. Essential for male fertility. Required for sperm flagellum biogenesis. Also required for acrosome biogenesis. Required for the attachment of developing acrosomes to the nucleus during spermiogenesis and may be involved in the transport of fibrous sheath components. This is Coiled-coil domain-containing protein 38 (Ccdc38) from Mus musculus (Mouse).